Reading from the N-terminus, the 367-residue chain is Peptide chain release factor 2 (367 aa).

N5-methylglutamine is present on Gln254.

It belongs to the prokaryotic/mitochondrial release factor family. Methylated by PrmC. Methylation increases the termination efficiency of RF2.

The protein resides in the cytoplasm. Peptide chain release factor 2 directs the termination of translation in response to the peptide chain termination codons UGA and UAA. This Bordetella bronchiseptica (strain ATCC BAA-588 / NCTC 13252 / RB50) (Alcaligenes bronchisepticus) protein is Peptide chain release factor 2.